Here is a 344-residue protein sequence, read N- to C-terminus: Phosphoribosylformylglycinamidine cyclo-ligase (344 aa).

The protein belongs to the AIR synthase family.

It is found in the cytoplasm. It catalyses the reaction 2-formamido-N(1)-(5-O-phospho-beta-D-ribosyl)acetamidine + ATP = 5-amino-1-(5-phospho-beta-D-ribosyl)imidazole + ADP + phosphate + H(+). The protein operates within purine metabolism; IMP biosynthesis via de novo pathway; 5-amino-1-(5-phospho-D-ribosyl)imidazole from N(2)-formyl-N(1)-(5-phospho-D-ribosyl)glycinamide: step 2/2. The sequence is that of Phosphoribosylformylglycinamidine cyclo-ligase from Glaesserella parasuis serovar 5 (strain SH0165) (Haemophilus parasuis).